We begin with the raw amino-acid sequence, 161 residues long: Nucleotide-binding protein Ssed_3443 (161 aa).

It belongs to the YajQ family.

Its function is as follows. Nucleotide-binding protein. The chain is Nucleotide-binding protein Ssed_3443 from Shewanella sediminis (strain HAW-EB3).